The following is a 119-amino-acid chain: Ribonuclease P protein component (119 aa).

The protein belongs to the RnpA family. Consists of a catalytic RNA component (M1 or rnpB) and a protein subunit.

The enzyme catalyses Endonucleolytic cleavage of RNA, removing 5'-extranucleotides from tRNA precursor.. Functionally, RNaseP catalyzes the removal of the 5'-leader sequence from pre-tRNA to produce the mature 5'-terminus. It can also cleave other RNA substrates such as 4.5S RNA. The protein component plays an auxiliary but essential role in vivo by binding to the 5'-leader sequence and broadening the substrate specificity of the ribozyme. This Escherichia coli O157:H7 protein is Ribonuclease P protein component.